The primary structure comprises 135 residues: ATP synthase epsilon chain 1 (135 aa).

Belongs to the ATPase epsilon chain family. In terms of assembly, F-type ATPases have 2 components, CF(1) - the catalytic core - and CF(0) - the membrane proton channel. CF(1) has five subunits: alpha(3), beta(3), gamma(1), delta(1), epsilon(1). CF(0) has three main subunits: a, b and c.

The protein localises to the cell inner membrane. In terms of biological role, produces ATP from ADP in the presence of a proton gradient across the membrane. The polypeptide is ATP synthase epsilon chain 1 (Nitrobacter hamburgensis (strain DSM 10229 / NCIMB 13809 / X14)).